Here is a 429-residue protein sequence, read N- to C-terminus: UDP-N-acetylglucosamine 1-carboxyvinyltransferase (429 aa).

Residue 22–23 coordinates phosphoenolpyruvate; that stretch reads KN. Arg102 contacts UDP-N-acetyl-alpha-D-glucosamine. Cys126 (proton donor) is an active-site residue. 2-(S-cysteinyl)pyruvic acid O-phosphothioketal is present on Cys126. Asp316 and Ile338 together coordinate UDP-N-acetyl-alpha-D-glucosamine.

It belongs to the EPSP synthase family. MurA subfamily.

It localises to the cytoplasm. The catalysed reaction is phosphoenolpyruvate + UDP-N-acetyl-alpha-D-glucosamine = UDP-N-acetyl-3-O-(1-carboxyvinyl)-alpha-D-glucosamine + phosphate. It participates in cell wall biogenesis; peptidoglycan biosynthesis. Functionally, cell wall formation. Adds enolpyruvyl to UDP-N-acetylglucosamine. The sequence is that of UDP-N-acetylglucosamine 1-carboxyvinyltransferase from Methylorubrum extorquens (strain PA1) (Methylobacterium extorquens).